A 586-amino-acid chain; its full sequence is Kelch-like protein 7 (586 aa).

A BTB domain is found at 44–111 (CDVILMVQER…AYTARISVNS (68 aa)). The BACK domain occupies 146 to 248 (CLGISVLAEC…SKNFLSKTVQ (103 aa)). Kelch repeat units follow at residues 294–336 (RIAL…FWDN), 337–382 (VVYI…AAEG), 383–430 (KIYT…EANG), 431–481 (LIYV…FVKD), 483–528 (IFAV…AVGS), and 530–575 (VYVL…CVVD).

Homodimer. Component of the BCR(KLHL7) E3 ubiquitin ligase complex, at least composed of CUL3 and KLHL7 and RBX1. As to expression, widely expressed, with highest levels in adult and fetal heart, CNS and adult testis.

Its subcellular location is the nucleus. The protein resides in the cytoplasm. It participates in protein modification; protein ubiquitination. Functionally, substrate-specific adapter of a BCR (BTB-CUL3-RBX1) E3 ubiquitin ligase complex. The BCR(KLHL7) complex acts by mediating ubiquitination and subsequent degradation of substrate proteins. Probably mediates 'Lys-48'-linked ubiquitination. The chain is Kelch-like protein 7 (KLHL7) from Homo sapiens (Human).